Consider the following 314-residue polypeptide: Malate dehydrogenase (314 aa).

Residues 11-16 (GSGNIG) and Asp-35 each bind NAD(+). Residues Arg-84 and Arg-90 each coordinate substrate. Residues Asn-97 and 120-122 (ITN) contribute to the NAD(+) site. Substrate-binding residues include Asn-122 and Arg-153. His-177 acts as the Proton acceptor in catalysis.

This sequence belongs to the LDH/MDH superfamily. MDH type 3 family.

It carries out the reaction (S)-malate + NAD(+) = oxaloacetate + NADH + H(+). Functionally, catalyzes the reversible oxidation of malate to oxaloacetate. This Rickettsia felis (strain ATCC VR-1525 / URRWXCal2) (Rickettsia azadi) protein is Malate dehydrogenase.